Consider the following 360-residue polypeptide: Phospho-N-acetylmuramoyl-pentapeptide-transferase (360 aa).

The Periplasmic segment spans residues 1 to 25 (MLVWLAEHLVKYYSGFNVFSYLTFR). The helical transmembrane segment at 26–46 (AIVSLLTALFISLWMGPRMIA) threads the bilayer. At 47 to 71 (HLQKLSFGQVVRNDGPESHFSKRGT) the chain is on the cytoplasmic side. A helical membrane pass occupies residues 72–92 (PTMGGIMILTAIVISVLLWAY). Proline 93 is a topological domain (periplasmic). Residues 94–114 (SNPYVWCVLVVLVGYGVIGFV) traverse the membrane as a helical segment. The Cytoplasmic portion of the chain corresponds to 115–131 (DDYRKVVRKDTKGLIAR). The chain crosses the membrane as a helical span at residues 132-152 (WKYFWMSVIALGVAFALYLVG). The Periplasmic portion of the chain corresponds to 153-167 (KDTPATQLVVPFFKD). The helical transmembrane segment at 168 to 188 (VMPQLGLFYILLAYFVIVGTG) threads the bilayer. Over 189–198 (NAVNLTDGLD) the chain is Cytoplasmic. The chain crosses the membrane as a helical span at residues 199 to 219 (GLAIMPTVFVAGGFALVAWAT). The Periplasmic portion of the chain corresponds to 220–235 (GNMNFASYLHIPYLRH). Residues 236–256 (AGELVIVCTAIVGAGLGFLWF) form a helical membrane-spanning segment. Residues 257-262 (NTYPAQ) lie on the Cytoplasmic side of the membrane. A helical transmembrane segment spans residues 263-283 (VFMGDVGSLALGGALGIIAVL). The Periplasmic portion of the chain corresponds to 284-287 (LRQE). A helical membrane pass occupies residues 288-308 (FLLVIMGGVFVVETLSVILQV). The Cytoplasmic portion of the chain corresponds to 309-337 (GSFKLRGQRIFRMAPIHHHYELKGWPEPR). The chain crosses the membrane as a helical span at residues 338 to 358 (VIVRFWIISLMLVLIGLATLK). Residues 359 to 360 (VR) lie on the Periplasmic side of the membrane.

Belongs to the glycosyltransferase 4 family. MraY subfamily. Mg(2+) serves as cofactor.

It is found in the cell inner membrane. The catalysed reaction is UDP-N-acetyl-alpha-D-muramoyl-L-alanyl-gamma-D-glutamyl-meso-2,6-diaminopimeloyl-D-alanyl-D-alanine + di-trans,octa-cis-undecaprenyl phosphate = di-trans,octa-cis-undecaprenyl diphospho-N-acetyl-alpha-D-muramoyl-L-alanyl-D-glutamyl-meso-2,6-diaminopimeloyl-D-alanyl-D-alanine + UMP. It participates in cell wall biogenesis; peptidoglycan biosynthesis. In terms of biological role, catalyzes the initial step of the lipid cycle reactions in the biosynthesis of the cell wall peptidoglycan: transfers peptidoglycan precursor phospho-MurNAc-pentapeptide from UDP-MurNAc-pentapeptide onto the lipid carrier undecaprenyl phosphate, yielding undecaprenyl-pyrophosphoryl-MurNAc-pentapeptide, known as lipid I. The protein is Phospho-N-acetylmuramoyl-pentapeptide-transferase of Escherichia coli O157:H7.